Reading from the N-terminus, the 397-residue chain is Chorismate synthase (397 aa).

Residues Arg-40 and Arg-46 each coordinate NADP(+). FMN contacts are provided by residues Arg-129–Ser-131, Gln-257–Ala-258, Gly-302, Lys-317–Thr-321, and Arg-343.

It belongs to the chorismate synthase family. In terms of assembly, homotetramer. FMNH2 serves as cofactor.

The enzyme catalyses 5-O-(1-carboxyvinyl)-3-phosphoshikimate = chorismate + phosphate. It functions in the pathway metabolic intermediate biosynthesis; chorismate biosynthesis; chorismate from D-erythrose 4-phosphate and phosphoenolpyruvate: step 7/7. Catalyzes the anti-1,4-elimination of the C-3 phosphate and the C-6 proR hydrogen from 5-enolpyruvylshikimate-3-phosphate (EPSP) to yield chorismate, which is the branch point compound that serves as the starting substrate for the three terminal pathways of aromatic amino acid biosynthesis. This reaction introduces a second double bond into the aromatic ring system. The chain is Chorismate synthase from Chlorobium phaeobacteroides (strain BS1).